Here is a 197-residue protein sequence, read N- to C-terminus: MGVNEYLLVGLGNPGREYQDTRHNAGSLLLDDLSSRWSGSNSIEKYNSTFRKARVAGNSLALMQPLTYMNRSGLAVAEYVRFFKIVAENIIVIHDDIDMAPGRVKLVRGGGAGGHNGIKSINSSLGFVDYYRLKIGVGRPGKHGIHPEIPVDKYVLAPFSAEQLDIIVGRYDAIAAGLETFFRDSPAAAATVLNSLR.

Residue Tyr-18 participates in tRNA binding. The active-site Proton acceptor is the His-23. TRNA is bound by residues Tyr-68, Asn-70, and Asn-116.

It belongs to the PTH family. As to quaternary structure, monomer.

It is found in the cytoplasm. It catalyses the reaction an N-acyl-L-alpha-aminoacyl-tRNA + H2O = an N-acyl-L-amino acid + a tRNA + H(+). Functionally, hydrolyzes ribosome-free peptidyl-tRNAs (with 1 or more amino acids incorporated), which drop off the ribosome during protein synthesis, or as a result of ribosome stalling. Catalyzes the release of premature peptidyl moieties from peptidyl-tRNA molecules trapped in stalled 50S ribosomal subunits, and thus maintains levels of free tRNAs and 50S ribosomes. This Desulfotalea psychrophila (strain LSv54 / DSM 12343) protein is Peptidyl-tRNA hydrolase.